Reading from the N-terminus, the 486-residue chain is Argininosuccinate lyase (486 aa).

This sequence belongs to the lyase 1 family. Argininosuccinate lyase subfamily.

Its subcellular location is the cytoplasm. It catalyses the reaction 2-(N(omega)-L-arginino)succinate = fumarate + L-arginine. It functions in the pathway amino-acid biosynthesis; L-arginine biosynthesis; L-arginine from L-ornithine and carbamoyl phosphate: step 3/3. The sequence is that of Argininosuccinate lyase from Acidovorax ebreus (strain TPSY) (Diaphorobacter sp. (strain TPSY)).